Consider the following 340-residue polypeptide: MYG1 protein C27H6.8 (340 aa).

Belongs to the MYG1 family.

The polypeptide is MYG1 protein C27H6.8 (Caenorhabditis elegans).